The chain runs to 178 residues: Neuroblastoma suppressor of tumorigenicity 1 (178 aa).

The signal sequence occupies residues 1–16 (MLWVLVGAVLPVMLLA). Cystine bridges form between Cys34-Cys84, Cys48-Cys98, Cys58-Cys117, Cys62-Cys119, and Cys81-Cys122. The region spanning 34–123 (CEAKNITQIV…IVHCSCQACG (90 aa)) is the CTCK domain. Residues 132 to 178 (NVYVQGEDSPGSQPGPHSHAHPHPGGQTPEPEEPPGAPQVEEEGAED) are disordered. Residues 140–160 (SPGSQPGPHSHAHPHPGGQTP) are compositionally biased toward low complexity.

It belongs to the DAN family. Homodimer.

It is found in the secreted. Possible candidate as a tumor suppressor gene of neuroblastoma. May play an important role in preventing cells from entering the final stage (G1/S) of the transformation process. This chain is Neuroblastoma suppressor of tumorigenicity 1 (Nbl1), found in Mus musculus (Mouse).